The chain runs to 151 residues: uncharacterized protein (151 aa).

This sequence to M.jannaschii MJ1244 and MJ1245.

This is an uncharacterized protein from Methanothermobacter thermautotrophicus (strain ATCC 29096 / DSM 1053 / JCM 10044 / NBRC 100330 / Delta H) (Methanobacterium thermoautotrophicum).